Reading from the N-terminus, the 539-residue chain is RING finger protein 37 (539 aa).

The segment at 226–249 is disordered; it reads PALPMESDCDPGGQSESQHSPCTL. Residues 239-249 are compositionally biased toward polar residues; sequence QSESQHSPCTL. A U-box domain is found at 258-338; it reads DVPEEFLDPI…DRFLLQHSIS (81 aa). Disordered regions lie at residues 359–399 and 456–479; these read LPSR…EPTA and GTRG…VSGP. Over residues 374 to 395 the composition is skewed to low complexity; sequence HYSLGMSASSSATSPLFSPTTS. The segment at 481-526 adopts an RING-type zinc-finger fold; the sequence is CASCKQAFSSYSTNEPVYQLPCGHLLCRPCLSEKQRSQPMMCTACR.

In terms of assembly, interacts with UBE2L3. Interacts with VCP. In terms of tissue distribution, expressed in testis and placenta.

The protein resides in the nucleus. It carries out the reaction S-ubiquitinyl-[E2 ubiquitin-conjugating enzyme]-L-cysteine + [acceptor protein]-L-lysine = [E2 ubiquitin-conjugating enzyme]-L-cysteine + N(6)-ubiquitinyl-[acceptor protein]-L-lysine.. It participates in protein modification; protein ubiquitination. Functionally, may have a ubiquitin-protein ligase activity acting as an E3 ubiquitin-protein ligase or as a ubiquitin-ubiquitin ligase promoting elongation of ubiquitin chains on substrates. The polypeptide is RING finger protein 37 (Ubox5) (Mus musculus (Mouse)).